The following is a 144-amino-acid chain: Large ribosomal subunit protein uL15 (144 aa).

The segment at 20-49 is disordered; that stretch reads GRGIGSGLGKTGGRGHKGQKSRSGGFHKVG. A compositionally biased stretch (gly residues) spans 21 to 31; it reads RGIGSGLGKTG.

This sequence belongs to the universal ribosomal protein uL15 family. In terms of assembly, part of the 50S ribosomal subunit.

Functionally, binds to the 23S rRNA. This Neisseria meningitidis serogroup A / serotype 4A (strain DSM 15465 / Z2491) protein is Large ribosomal subunit protein uL15.